Consider the following 151-residue polypeptide: Ribosome maturation factor RimP (151 aa).

The protein belongs to the RimP family.

The protein localises to the cytoplasm. In terms of biological role, required for maturation of 30S ribosomal subunits. This is Ribosome maturation factor RimP from Vibrio campbellii (strain ATCC BAA-1116).